The sequence spans 71 residues: Ceratotoxin-A (71 aa).

Residues 1 to 23 (MANLKAVFLICIVAFIAFQCVVA) form the signal peptide. 2 propeptides span residues 24–35 (EPAAEDSIVVKR) and 65–71 (VAAGLVG).

As to quaternary structure, homomer of four to six subunits.

The protein localises to the secreted. Female-specific peptides with potent activity against Gram-positive and Gram-negative bacteria. They have as well hemolytic activity. This Ceratitis capitata (Mediterranean fruit fly) protein is Ceratotoxin-A (CTXA2).